The sequence spans 134 residues: MKSVFTLSASLAISLMLCCTAQANDHKILGVIAMPRNETNDLALKLPVCRIVKRIQLSADHGDLQLSGASVYFKAARSASQSLNIPSEIKEGQTTDWININSDNDNKRCVSKITFSGHTVNSSDMATLKIIGDD.

A signal peptide spans 1-23 (MKSVFTLSASLAISLMLCCTAQA).

Belongs to the UPF0412 family.

The sequence is that of UPF0412 protein YaaI from Escherichia coli O17:K52:H18 (strain UMN026 / ExPEC).